The primary structure comprises 739 residues: Platelet endothelial cell adhesion molecule (739 aa).

The signal sequence occupies residues 1 to 27; the sequence is MQLRWTQRGMMWLGALLTLLLCSSLKG. Residues 28-599 lie on the Extracellular side of the membrane; sequence QENSFTINSI…TVRVYLPLEK (572 aa). Ig-like C2-type domains follow at residues 35-120, 145-213, and 236-315; these read NSIH…EKTT, GGVV…IFSG, and PKFH…SKVS. Asn-52, Asn-84, and Asn-151 each carry an N-linked (GlcNAc...) asparagine glycan. A disulfide bridge links Cys-57 with Cys-109. Intrachain disulfides connect Cys-152/Cys-206 and Cys-256/Cys-304. Asn-301, Asn-320, Asn-356, Asn-371, Asn-435, Asn-446, Asn-453, Asn-550, and Asn-578 each carry an N-linked (GlcNAc...) asparagine glycan. Ig-like C2-type domains are found at residues 328-403, 424-493, and 499-590; these read PKLE…VQIT, GQTI…EVLR, and PVDE…NTLT. Intrachain disulfides connect Cys-347-Cys-386, Cys-431-Cys-476, and Cys-522-Cys-571. Residues 600-618 traverse the membrane as a helical segment; that stretch reads GLIAVVVIGVIIVTLVLGA. Residues 619-739 are Cytoplasmic-facing; that stretch reads KCYFLKKAKA…SRTEGSLDGS (121 aa). A lipid anchor (S-palmitoyl cysteine) is attached at Cys-620. Short sequence motifs (ITIM motif) lie at residues 687 to 692 and 712 to 717; these read VEYTEV and TVYSEI. A phosphotyrosine; by FER mark is found at Tyr-689 and Tyr-714. A membrane-bound segment which detaches upon phosphorylation region spans residues 708–730; the sequence is TETETVYSEIRKADPDFVENRYS. Residues 722–739 form a may play a role in cytoprotective signaling region; that stretch reads PDFVENRYSRTEGSLDGS. A phosphoserine mark is found at Ser-730 and Ser-735.

As to quaternary structure, trans-homodimer (via Ig-like C2-type 1 and Ig-like C2-type 2 domains); trans-homodimerization is required for cell-cell interaction. Forms a complex with BDKRB2 and GNAQ. Interacts with BDKRB2 and GNAQ. Interacts with PTPN11; Tyr-714 is critical for PTPN11 recruitment. Interacts with FER. Interacts with CD177; the interaction is Ca(2+)-dependent; the interaction is direct. Phosphorylated on Ser and Tyr residues by src kinases after cellular activation. Upon activation, phosphorylated on Ser-730 which probably initiates the dissociation of the membrane-interaction segment (residues 708-730) from the cell membrane allowing the sequential phosphorylation of Tyr-714 and Tyr-689. Constitutively phosphorylated on Ser-735 in resting platelets. Phosphorylated on tyrosine residues by FER and FES in response to FCER1 activation. In endothelial cells Fyn mediates mechanical-force (stretch or pull) induced tyrosine phosphorylation. In terms of processing, palmitoylation by ZDHHC21 is necessary for cell surface expression in endothelial cells and enrichment in membrane rafts.

The protein resides in the cell membrane. It is found in the membrane raft. The protein localises to the cell junction. Its function is as follows. Cell adhesion molecule which is required for leukocyte transendothelial migration (TEM) under most inflammatory conditions. Tyr-689 plays a critical role in TEM and is required for efficient trafficking of PECAM1 to and from the lateral border recycling compartment (LBRC) and is also essential for the LBRC membrane to be targeted around migrating leukocytes. Trans-homophilic interaction may play a role in endothelial cell-cell adhesion via cell junctions. Heterophilic interaction with CD177 plays a role in transendothelial migration of neutrophils. Homophilic ligation of PECAM1 prevents macrophage-mediated phagocytosis of neighboring viable leukocytes by transmitting a detachment signal. Promotes macrophage-mediated phagocytosis of apoptotic leukocytes by tethering them to the phagocytic cells; PECAM1-mediated detachment signal appears to be disabled in apoptotic leukocytes. Modulates bradykinin receptor BDKRB2 activation. Regulates bradykinin- and hyperosmotic shock-induced ERK1/2 activation in endothelial cells. Induces susceptibility to atherosclerosis. The polypeptide is Platelet endothelial cell adhesion molecule (PECAM1) (Bos taurus (Bovine)).